The primary structure comprises 492 residues: Phenylalanine--tRNA ligase alpha subunit (492 aa).

L-phenylalanine contacts are provided by residues Thr-335, 374–376, and Tyr-414; that span reads QLE. Glu-416 provides a ligand contact to Mg(2+). Residue Phe-439 participates in L-phenylalanine binding.

This sequence belongs to the class-II aminoacyl-tRNA synthetase family. Phe-tRNA synthetase alpha subunit type 2 subfamily. Tetramer of two alpha and two beta subunits. It depends on Mg(2+) as a cofactor.

It localises to the cytoplasm. The enzyme catalyses tRNA(Phe) + L-phenylalanine + ATP = L-phenylalanyl-tRNA(Phe) + AMP + diphosphate + H(+). The protein is Phenylalanine--tRNA ligase alpha subunit of Methanosarcina acetivorans (strain ATCC 35395 / DSM 2834 / JCM 12185 / C2A).